A 477-amino-acid polypeptide reads, in one-letter code: Cysteine--tRNA ligase (477 aa).

Cys-29 lines the Zn(2+) pocket. A 'HIGH' region motif is present at residues 31–41 (PTVYDYPHLGH). Zn(2+) is bound by residues Cys-209, His-234, and Glu-238. Residues 266–270 (KMSKS) carry the 'KMSKS' region motif. An ATP-binding site is contributed by Lys-269.

The protein belongs to the class-I aminoacyl-tRNA synthetase family. Zn(2+) serves as cofactor.

The protein localises to the cytoplasm. It catalyses the reaction tRNA(Cys) + L-cysteine + ATP = L-cysteinyl-tRNA(Cys) + AMP + diphosphate. The polypeptide is Cysteine--tRNA ligase (cysS) (Pyrococcus abyssi (strain GE5 / Orsay)).